Consider the following 1001-residue polypeptide: MAPSRRDLQLTPVTGGSSSQISDMEEVGLLDSYHNEANADDILTKIEEGRDVSGLRKIQVGVTGMTCAACSNSVEAALMNVNGVFKASVALLQNRADVVFDPNLVKEEDIKEAIEDAGFEAEILAEEQTQATLVGQFTIGGMTCAACVNSVEGILRDLPGVKRAVVALSTSLGEVEYDPNVINKDDIVNAIEDAGFEGSLVQSNQQDKLVLRVDGILNELDAQVLEGILTRLNGVRQFRLDRISGELEVVFDPEVVSSRSLVDGIEEDGFGKFKLRVMSPYERLSSKDTGEASNMFRRFISSLVLSIPLFFIQVICPHIALFDALLVWRCGPFMMGDWLKWALVSVIQFVIGKRFYVAAWRALRNGSTNMDVLVALGTSASYFYSVGALLYGAVTGFWSPTYFDASAMLITFVLLGKYLESLAKGKTSDAMKKLVQLTPATAILLTEGKGGKLVGEREIDALLIQPGDTLKVHPGAKIPADGVVVWGSSYVNESMVTGESVPVSKEVDSPVIGGTINMHGALHMKATKVGSDAVLSQIISLVETAQMSKAPIQKFADYVASIFVPVVITLALFTLVGWSIGGAVGAYPDEWLPENGTHFVFSLMFSISVVVIACPCALGLATPTAVMVATGVGATNGVLIKGGDALEKAHKVKYVIFDKTGTLTQGKATVTTTKVFSEMDRGEFLTLVASAEASSEHPLAKAIVAYARHFHFFDESTEDGETNNKDLQNSGWLLDTSDFSALPGKGIQCLVNEKMILVGNRKLMSENAINIPDHVEKFVEDLEESGKTGVIVAYNGKLVGVMGIADPLKREAALVVEGLLRMGVRPIMVTGDNWRTARAVAKEVGIEDVRAEVMPAGKADVIRSLQKDGSTVAMVGDGINDSPALAAADVGMAIGAGTDVAIEAADYVLMRNNLEDVITAIDLSRKTLTRIRLNYVFAMAYNVVSIPIAAGVFFPVLRVQLPPWAAGACMALSSVSVVCSSLLLRRYKKPRLTTVLKITTE.

The interval 1–21 (MAPSRRDLQLTPVTGGSSSQI) is disordered. Residues 1-298 (MAPSRRDLQL…TGEASNMFRR (298 aa)) lie on the Cytoplasmic side of the membrane. Over residues 11-21 (TPVTGGSSSQI) the composition is skewed to polar residues. HMA domains are found at residues 56 to 122 (RKIQ…FEAE) and 133 to 199 (LVGQ…FEGS). The Cu(+) site is built by Cys-67, Cys-70, Cys-144, and Cys-147. In terms of domain architecture, HMA 3; degenerate spans 207 to 273 (DKLVLRVDGI…GIEEDGFGKF (67 aa)). A helical transmembrane segment spans residues 299–320 (FISSLVLSIPLFFIQVICPHIA). Residues 321-338 (LFDALLVWRCGPFMMGDW) lie on the Extracellular side of the membrane. A helical membrane pass occupies residues 339-358 (LKWALVSVIQFVIGKRFYVA). Over 359–365 (AWRALRN) the chain is Cytoplasmic. A helical membrane pass occupies residues 366 to 386 (GSTNMDVLVALGTSASYFYSV). The Extracellular portion of the chain corresponds to 387–403 (GALLYGAVTGFWSPTYF). Residues 404–424 (DASAMLITFVLLGKYLESLAK) form a helical membrane-spanning segment. Residues 425–558 (GKTSDAMKKL…KAPIQKFADY (134 aa)) are Cytoplasmic-facing. The helical transmembrane segment at 559 to 581 (VASIFVPVVITLALFTLVGWSIG) threads the bilayer. Residues 582–602 (GAVGAYPDEWLPENGTHFVFS) are Extracellular-facing. A helical transmembrane segment spans residues 603–620 (LMFSISVVVIACPCALGL). Residues 621 to 931 (ATPTAVMVAT…DLSRKTLTRI (311 aa)) are Cytoplasmic-facing. The active-site 4-aspartylphosphate intermediate is the Asp-658. Residues Asp-877 and Asp-881 each contribute to the Mg(2+) site. A helical membrane pass occupies residues 932–951 (RLNYVFAMAYNVVSIPIAAG). At 952-963 (VFFPVLRVQLPP) the chain is on the extracellular side. Residues 964–982 (WAAGACMALSSVSVVCSSL) traverse the membrane as a helical segment. Over 983–1001 (LLRRYKKPRLTTVLKITTE) the chain is Cytoplasmic.

This sequence belongs to the cation transport ATPase (P-type) (TC 3.A.3) family. Type IB subfamily.

It is found in the membrane. It catalyses the reaction Cu(+)(in) + ATP + H2O = Cu(+)(out) + ADP + phosphate + H(+). Functionally, involved in copper import into the cell. Essential for ethylene signaling, which requires copper. Acts by delivering copper to create functional hormone receptors. The polypeptide is Copper-transporting ATPase RAN1 (RAN1) (Arabidopsis thaliana (Mouse-ear cress)).